The following is a 460-amino-acid chain: Spermatogenesis-defective protein 39 homolog (460 aa).

The residue at position 21 (threonine 21) is a Phosphothreonine. Residues 70–101 (SIKETAGSSGSTSEGREQMKGRNSFYTQLPKP) form a disordered region. Residues 73–82 (ETAGSSGSTS) are compositionally biased toward low complexity. Position 115 is a phosphothreonine (threonine 115). Phosphoserine is present on residues serine 119, serine 122, and serine 128. Polar residues predominate over residues 121–133 (QSLSDALSDTPAK). The disordered stretch occupies residues 121-141 (QSLSDALSDTPAKTYSPELGR). Threonine 130 carries the post-translational modification Phosphothreonine.

The protein belongs to the SPE39 family. In terms of assembly, interacts with VPS33B. Associates with the homotypic fusion and vacuole protein sorting (HOPS) complex; impaired by VPS33B. Interacts with RAB11A.

The protein localises to the cytoplasm. It is found in the cytoplasmic vesicle. The protein resides in the early endosome. It localises to the recycling endosome. Its subcellular location is the late endosome. Functionally, proposed to be involved in endosomal maturation implicating in part VPS33B. In epithelial cells, the VPS33B:VIPAS39 complex may play a role in the apical RAB11A-dependent recycling pathway and in the maintenance of the apical-basolateral polarity. May play a role in lysosomal trafficking, probably via association with the core HOPS complex in a discrete population of endosomes; the functions seems to be independent of VPS33B. May play a role in vesicular trafficking during spermatogenesis. May be involved in direct or indirect transcriptional regulation of E-cadherin. The sequence is that of Spermatogenesis-defective protein 39 homolog (Vipas39) from Rattus norvegicus (Rat).